The sequence spans 234 residues: Probable pectate lyase F (234 aa).

The N-terminal stretch at 1-17 (MFSRIALLPAFLPVALA) is a signal peptide. 2 N-linked (GlcNAc...) asparagine glycosylation sites follow: Asn168 and Asn194.

Belongs to the polysaccharide lyase 3 family. It depends on Ca(2+) as a cofactor.

It is found in the secreted. It carries out the reaction Eliminative cleavage of (1-&gt;4)-alpha-D-galacturonan to give oligosaccharides with 4-deoxy-alpha-D-galact-4-enuronosyl groups at their non-reducing ends.. Functionally, pectinolytic enzyme consist of four classes of enzymes: pectin lyase, polygalacturonase, pectin methylesterase and rhamnogalacturonase. Among pectinolytic enzymes, pectin lyase is the most important in depolymerization of pectin, since it cleaves internal glycosidic bonds of highly methylated pectins. Favors pectate, the anion, over pectin, the methyl ester. The polypeptide is Probable pectate lyase F (plyF) (Aspergillus flavus (strain ATCC 200026 / FGSC A1120 / IAM 13836 / NRRL 3357 / JCM 12722 / SRRC 167)).